Reading from the N-terminus, the 431-residue chain is Argininosuccinate lyase (431 aa).

The protein belongs to the lyase 1 family. Argininosuccinate lyase subfamily.

It is found in the cytoplasm. The enzyme catalyses 2-(N(omega)-L-arginino)succinate = fumarate + L-arginine. It participates in amino-acid biosynthesis; L-arginine biosynthesis; L-arginine from L-ornithine and carbamoyl phosphate: step 3/3. The chain is Argininosuccinate lyase from Stenotrophomonas maltophilia (strain K279a).